Here is a 392-residue protein sequence, read N- to C-terminus: Caveolae-associated protein 1 (392 aa).

An N-acetylmethionine modification is found at Met-1. A compositionally biased stretch (basic and acidic residues) spans 1–10 (MEDVTLHIVE). A disordered region spans residues 1–45 (MEDVTLHIVERPYSGFPDASSEGPEPTQGEARATEEPSGTGSDEL). The tract at residues 1 to 100 (MEDVTLHIVE…IQGELSKLGK (100 aa)) is required for homotrimerization and for interaction with CAVIN2 and CAVIN3. A phosphoserine mark is found at Ser-21 and Ser-38. Thr-40 is subject to Phosphothreonine. Ser-42 and Ser-48 each carry phosphoserine. Residues 54–64 (VLVLSLLDKII) form a nuclear export signal region. Positions 55–77 (LVLSLLDKIIGAVDQIQLTQAQL) are leucine-zipper 1. Residue Lys-118 forms a Glycyl lysine isopeptide (Lys-Gly) (interchain with G-Cter in SUMO2) linkage. Residue Ser-120 is modified to Phosphoserine. Residue Lys-124 forms a Glycyl lysine isopeptide (Lys-Gly) (interchain with G-Cter in SUMO2) linkage. The nuclear localization signal stretch occupies residues 138 to 154 (KKLEVNEAELLRRRNFK). At Tyr-158 the chain carries Phosphotyrosine. Lys-163 participates in a covalent cross-link: Glycyl lysine isopeptide (Lys-Gly) (interchain with G-Cter in SUMO1); alternate. Lys-163 participates in a covalent cross-link: Glycyl lysine isopeptide (Lys-Gly) (interchain with G-Cter in SUMO2); alternate. A Glycyl lysine isopeptide (Lys-Gly) (interchain with G-Cter in SUMO2) cross-link involves residue Lys-167. The leucine-zipper 2 stretch occupies residues 168–188 (LSVSKSLKESEALPEKEGDEL). Phosphoserine is present on residues Ser-169 and Ser-171. Lys-172 is covalently cross-linked (Glycyl lysine isopeptide (Lys-Gly) (interchain with G-Cter in SUMO2)). Residues Ser-173 and Ser-177 each carry the phosphoserine modification. A compositionally biased stretch (basic and acidic residues) spans 173 to 183 (SLKESEALPEK). A disordered region spans residues 173 to 197 (SLKESEALPEKEGDELGEGERPEDD). A compositionally biased stretch (acidic residues) spans 184–197 (EGDELGEGERPEDD). Thr-198 carries the post-translational modification Phosphothreonine. Residues 201-284 (IELSSDEAVE…RMNKLGTRLV (84 aa)) are a coiled coil. 2 positions are modified to phosphoserine: Ser-204 and Ser-205. Positions 235-251 (KKAFSKEKMEKTKVRTR) are nuclear localization signal. A leucine-zipper 3 region spans residues 259 to 299 (LKTKENLEKTRHTLEKRMNKLGTRLVPVERREKLKTSRDKL). A Phosphoserine modification is found at Ser-302. Thr-304 carries the post-translational modification Phosphothreonine. Phosphotyrosine is present on Tyr-310. A Glycyl lysine isopeptide (Lys-Gly) (interchain with G-Cter in SUMO2) cross-link involves residue Lys-328. Residues 347 to 367 (GPEDDEVGAERGEATDLLRGS) are disordered. Residues Ser-367, Ser-368, Ser-381, Ser-389, and Ser-391 each carry the phosphoserine modification.

This sequence belongs to the CAVIN family. In terms of assembly, component of the CAVIN complex composed of CAVIN1, CAVIN2, CAVIN3 and CAVIN4. Homotrimer. Interacts with LIPE in the adipocyte cytoplasm. Interacts with RNA polymerase I subunit POLR1A/RPA1. Interacts with TTF1. Binds the 3' end of pre-rRNA. Interacts with transcription factor ZNF148. Interacts with CAV1, CAVIN2 and CAVIN3. Interacts with CAVIN4. In terms of processing, phosphorylated. Present in active and inactive forms. Changes in phosphorylation pattern may alter activity. Phosphorylation at Tyr-158 is essential for its function in the regulation of the ribosomal transcriptional activity. Monoubiquitinated. In terms of tissue distribution, expressed in the heart, stomach, adipose tissue and lung (at protein level). Expressed in testis, kidney, muscle, liver, spleen and brain.

The protein localises to the membrane. It localises to the caveola. The protein resides in the cell membrane. It is found in the microsome. Its subcellular location is the endoplasmic reticulum. The protein localises to the cytoplasm. It localises to the cytosol. The protein resides in the mitochondrion. It is found in the nucleus. Its function is as follows. Plays an important role in caveolae formation and organization. Essential for the formation of caveolae in all tissues. Core component of the CAVIN complex which is essential for recruitment of the complex to the caveolae in presence of calveolin-1 (CAV1). Essential for normal oligomerization of CAV1. Promotes ribosomal transcriptional activity in response to metabolic challenges in the adipocytes and plays an important role in the formation of the ribosomal transcriptional loop. Dissociates transcription complexes paused by DNA-bound TTF1, thereby releasing both RNA polymerase I and pre-RNA from the template. The caveolae biogenesis pathway is required for the secretion of proteins such as GASK1A. This chain is Caveolae-associated protein 1 (Cavin1), found in Mus musculus (Mouse).